Reading from the N-terminus, the 734-residue chain is Probable inactive histone-lysine N-methyltransferase SUVR1 (734 aa).

Residues 61-163 (QSTEKNKKEE…LPPLKRYVRR (103 aa)) are disordered. The span at 62–81 (STEKNKKEEEKKKKEEEKKS) shows a compositional bias: basic and acidic residues. The span at 98–109 (VQDEEDDMDEDE) shows a compositional bias: acidic residues. The segment covering 113–122 (KRRLRSRRGR) has biased composition (basic residues). Residues 123 to 132 (ASSSSSSSSS) show a composition bias toward low complexity. C460, C464, C468, C477, C545, C549, C551, and C555 together coordinate Zn(2+). One can recognise a Pre-SET domain in the interval 460-563 (CSTSCIEDCL…RCGNRVVQRG (104 aa)). Positions 566 to 696 (NKLQVFFTPN…AMEELAWDYG (131 aa)) constitute an SET domain. Residues 577–579 (KGW) and 652–653 (NH) contribute to the S-adenosyl-L-methionine site. Position 655 (C655) interacts with Zn(2+). S-adenosyl-L-methionine is bound at residue Y695. Residues 707–723 (KPFDCLCGSRFCRNKKR) form the Post-SET domain. Zn(2+)-binding residues include C711, C713, and C718.

It belongs to the class V-like SAM-binding methyltransferase superfamily. Histone-lysine methyltransferase family. As to quaternary structure, interacts with SUVR2 and itself.

Its subcellular location is the nucleus. The protein resides in the chromosome. Its function is as follows. Probable inactive histone-lysine methyltransferase that acts as regulator of transctiptional gene silencing independently of histone H3K9 methylation. Contributes to transcriptional gene silencing at RNA-directed DNA methylation (RdDM) target loci but also at RdDM-independent target loci. This is Probable inactive histone-lysine N-methyltransferase SUVR1 (SUVR1) from Arabidopsis thaliana (Mouse-ear cress).